A 456-amino-acid chain; its full sequence is Argininosuccinate lyase (456 aa).

The protein belongs to the lyase 1 family. Argininosuccinate lyase subfamily.

It localises to the cytoplasm. The enzyme catalyses 2-(N(omega)-L-arginino)succinate = fumarate + L-arginine. Its pathway is amino-acid biosynthesis; L-arginine biosynthesis; L-arginine from L-ornithine and carbamoyl phosphate: step 3/3. The sequence is that of Argininosuccinate lyase from Shewanella amazonensis (strain ATCC BAA-1098 / SB2B).